The chain runs to 455 residues: MAQFFQAKPNKSKQLSAKLSLSVTQLDHLGAGIAQHQGKIVFIPGVLPGETATVQFVEQKKSYAKAKLISIESASVNRIKPHCPHYQQCGGCDLQHMDTNAQREHKQTALVDLISKLSSAKAIDADIVADPIVGEAWHYRRRARLATLFDKNTQRLQLGFRAGNSNKIVSIQQCPVLSESLSALITPLAANLNQLKAKASLGHVELTQADNGNFAVLRVTKVLPASDIRWLTGFAEKHQLNLLLQDDAGQLTQLFPLLPAGDEAIALPYYHLAQEAVRCSFTPGNFVQVNGAINQAMVDQAIEWLDPQSGERILDLFCGVGNFSLPLALKAAEVIGVEGVPEMVQQAKQNAIDNQLDNVTFYHADLSADLSTQTWLGKIDKLLLDPARAGAFESLQWLQKMQPKKVVYVSCNPASLARDSSVLLASGYRIAQVGLVDMFPQTHHIEAMVLFELNI.

In terms of domain architecture, TRAM spans 12-70 (SKQLSAKLSLSVTQLDHLGAGIAQHQGKIVFIPGVLPGETATVQFVEQKKSYAKAKLIS). [4Fe-4S] cluster is bound by residues Cys83, Cys89, Cys92, and Cys174. S-adenosyl-L-methionine is bound by residues Gln288, Phe317, Asn322, Glu338, Asp365, and Asp385. Residue Cys411 is the Nucleophile of the active site.

It belongs to the class I-like SAM-binding methyltransferase superfamily. RNA M5U methyltransferase family. RlmD subfamily.

The enzyme catalyses uridine(1939) in 23S rRNA + S-adenosyl-L-methionine = 5-methyluridine(1939) in 23S rRNA + S-adenosyl-L-homocysteine + H(+). Catalyzes the formation of 5-methyl-uridine at position 1939 (m5U1939) in 23S rRNA. In Shewanella frigidimarina (strain NCIMB 400), this protein is 23S rRNA (uracil(1939)-C(5))-methyltransferase RlmD.